A 377-amino-acid polypeptide reads, in one-letter code: Mechanosensory abnormality protein 6 (377 aa).

Topologically, residues 1-13 (MGLQSAAAHFINR) are cytoplasmic. A helical membrane pass occupies residues 14-34 (FIIWITIFMVACFLLRLLVVL). Over 35-377 (DLNKRVYNHT…HCDLTHSYIT (343 aa)) the chain is Extracellular. C48 and C369 are joined by a disulfide. N94 carries an N-linked (GlcNAc...) asparagine glycan.

It belongs to the paraoxonase family. In terms of assembly, component of a non-voltage-gated amiloride-sensitive cation channel complex (also called the degenerin channel complex) composed of at least the mec-2, mec-4, mec-6 and mec-10 subunits; the complex mediates mechanotransduction in touch cells. Interacts with mec-2, mec-4 and mec-10. Glycosylated. In terms of tissue distribution, expressed in neurons including the six touch receptors, ventral cord motor neurons, HSN, PVD, PVC, IL1, and several neurons near the nerve ring, in the anal ganglion and in the male tail sensory rays, in muscles including the body wall, vulval, intestinal, anal depressor and sphincter muscles, and in the excretory canal.

It localises to the cell membrane. The protein localises to the cell projection. It is found in the axon. Its function is as follows. Subunit of an amiloride-sensitive cation channel (degenerin channel complex) permeable for sodium, potassium, lithium and N-methylglucamine, and required for mechanosensory transduction (touch sensitivity). Interacts with degenerin channel proteins and stabilizes the channel. Plays a role in mechanosensory transduction (touch sensitivity). This is Mechanosensory abnormality protein 6 from Caenorhabditis elegans.